A 409-amino-acid polypeptide reads, in one-letter code: Na(+)-translocating NADH-quinone reductase subunit F (409 aa).

Residues 5 to 25 (FIFGIGAFTAIVLVLAVVILI) form a helical membrane-spanning segment. The 2Fe-2S ferredoxin-type domain maps to 34-128 (GDITISINDD…SMDVELPEEV (95 aa)). [2Fe-2S] cluster-binding residues include cysteine 71, cysteine 77, cysteine 80, and cysteine 112. The 141-residue stretch at 131 to 271 (VKKWECTVIS…SGPFGEFFAK (141 aa)) folds into the FAD-binding FR-type domain.

The protein belongs to the NqrF family. As to quaternary structure, composed of six subunits; NqrA, NqrB, NqrC, NqrD, NqrE and NqrF. It depends on [2Fe-2S] cluster as a cofactor. FAD serves as cofactor.

The protein resides in the cell inner membrane. It carries out the reaction a ubiquinone + n Na(+)(in) + NADH + H(+) = a ubiquinol + n Na(+)(out) + NAD(+). Functionally, NQR complex catalyzes the reduction of ubiquinone-1 to ubiquinol by two successive reactions, coupled with the transport of Na(+) ions from the cytoplasm to the periplasm. The first step is catalyzed by NqrF, which accepts electrons from NADH and reduces ubiquinone-1 to ubisemiquinone by a one-electron transfer pathway. This is Na(+)-translocating NADH-quinone reductase subunit F from Actinobacillus succinogenes (strain ATCC 55618 / DSM 22257 / CCUG 43843 / 130Z).